The following is a 1221-amino-acid chain: Reverse gyrase subunit B (1221 aa).

The RG N-terminal-type zinc-finger motif lies at 56 to 97 (NEPVAIFGSSCVLCGGDCSSVRLTSRIGICERCLPVDTETLR). Residues Cys-66, Cys-69, Cys-85, and Cys-88 each contribute to the Zn(2+) site. Residues Gln-161 and 178 to 185 (APTGTGKT) each bind ATP. One can recognise a Helicase ATP-binding domain in the interval 165–400 (TRRLVKGCSF…AVVRELFDFE (236 aa)). The DEAD box signature appears at 284 to 287 (DDVD). One can recognise a Helicase C-terminal domain in the interval 424–600 (AVERIVRKAG…PLSLNTLMKL (177 aa)). The Toprim domain maps to 779–935 (SALMIVESPN…QVYRTEFHEV (157 aa)). A Mg(2+)-binding site is contributed by Glu-785. An RG C-terminal-type zinc finger spans residues 856–882 (LGRCSECGEQVVGSEECPNCGGEVELK). Zn(2+)-binding residues include Cys-859, Cys-862, Cys-872, and Cys-875. Position 904 (Asp-904) interacts with Mg(2+). In terms of domain architecture, Topo IA-type catalytic spans 953 to 1221 (DAGRVSAQIL…MLHLAGVSGR (269 aa)).

In the C-terminal section; belongs to the type IA topoisomerase family. It in the N-terminal section; belongs to the DEAD box helicase family. DDVD subfamily. Heterodimer of an RgyrA and RgyrB subunit. The topoisomerase domain is shared between the two subunits. It depends on Zn(2+) as a cofactor. The cofactor is Mg(2+). In terms of processing, the N-terminus is partially blocked.

It localises to the cytoplasm. It carries out the reaction ATP + H2O = ADP + phosphate + H(+). Modifies the topological state of DNA by introducing positive supercoils in an ATP-dependent process; dATP also allows positive supercoiling. Increases the linking number in steps of +1. Only this subunit binds ATP, it does so in a DNA- and RgyA-independent manner. Hydrolyzes ATP only in the presence of DNA. The RgyA subunit transiently cleaves a single DNA strand and remains covalently bound to the 5' DNA end probably through a tyrosine residue. It changes linking number in steps of one, and nicks DNA preferentially at 5'-CNNN | 3'-sites with a strong preference for 4 pyrimidine residues. There are about 1000 heterodimers per cell. May be involved in rewinding the DNA strands in the regions of the chromosome that have opened up to allow transcription or replication. Its function is as follows. This subunit expressed in E.coli only has DNA-dependent ATPase activity at 80 degrees Celsius. Reverse gyrase activity is reconstituted after incubation at 80 degrees Celsius for 5 minutes, positive supercoiling requires ATP and Mg(2+). In the presence of ATP it binds and nicks substrate but does not make closed product. The sequence is that of Reverse gyrase subunit B from Methanopyrus kandleri (strain AV19 / DSM 6324 / JCM 9639 / NBRC 100938).